A 1082-amino-acid chain; its full sequence is MTHDNRQLLPQETKLVTPNKDTLSSRYLHVLIIDNTLSTIEFVYMAVKAVLTQVDTLNALEQRKNRPTNRILGLSTSVSKRYINIPKFSSSGASNSQGVKTLAAIRKFCLPDKNCFRNFLSFSTTLFKVPSSIDIYFLFFTASTVSTMAARALDLEFILSSLKNSTSPESLLAATAKIELLSLAADSVTHNRVIAFINRLTPKKYHFDLIRQYAVFYFLNSTTLTSENKLLSAELLYEELSQIPSSSSSGTELENLNNAEVLYVFDRILNSIKMLKNELSSPIGKLRAQPAANDPGTDKTIKYSKIQSIIQKINSFTHENSLLANCRAVVELIDDLYRKLYSWFLHVLTFEDIQFPGDTFLDRLLKMDYCFTYYPSSNRHLIDLFEKTLDNQTFTNLDKFFDTSGNSPELLYQKTFSLKIFSKNLTAQDNGLYIYPLLKTDLSILDFLGTENILFHRGLIYHILHQKTIPQERENDLNKINQFFATVIQQVIETKSSCLPASLSQLLDTIFHFNRIGLNMETCRTYIEILSNHMATPDTQPIINTFTINLTHIVFTAHVFFICMENFSPTFIFYNRKKLILEQQRAILIIERNDYSTLWKQISDHIECLFNVSLSESFFKEYTKGGNEDQKQFLYKNLFEKWGNVFFPFTYSVSTSNNSTAHHITTLELRDICKEVYQSDSPDAYESLLPYSTHPSFKTLFVKIYVIPMVSHITNLTFDKLQSDCRLLTLIHACKLLLPSQHLLLHYMAWLYAFSINVDHIDLGTFTVIKSVIFKIADHINVMTHTIYSPETNLLVSILLNAYTNYLQKYVNPWIKQTITANFSLIQTYITFTKQCASILATKCNINLDNLFIYITIGTDKIVTTSFCSFIATCRNLVRQHEEFEKSLQTIQISEITLTGMLRNIITSVSSSKELLTNEALQKFIDTVQRISQHVNETYHSISVNLEKCKTSNDILIESLKKIIYIVDVLSSNAILNTSLASRCLEAANLAVSNNSFTILEIKKDAVAVFKPFITQLFESMKPTTSLHKKLMSTQKLTTDHIPFLDTFDDRYNLVRHVERQLNWYAAHAEAAQQDLITPLKF.

An interaction with large tegument protein region spans residues 604-1082 (DHIECLFNVS…QQDLITPLKF (479 aa)).

The protein belongs to the herpesviridae inner tegument protein family. In terms of assembly, interacts (via C-terminus) with the large tegument protein/LTP (via N-terminus).

It is found in the virion tegument. The protein resides in the host cytoplasm. It localises to the host nucleus. The protein localises to the host Golgi apparatus. Its subcellular location is the host trans-Golgi network. In terms of biological role, plays an essential role in cytoplasmic secondary envelopment during viral egress. Interacts with the capsid via the large tegument protein/LTP and participates in its transport to the host trans-Golgi network (TGN) where secondary envelopment occurs. Modulates tegumentation and capsid accumulation at the viral assembly complex. The protein is Inner tegument protein (U30) of Homo sapiens (Human).